A 1070-amino-acid polypeptide reads, in one-letter code: Phosphatidylinositol 4,5-bisphosphate 3-kinase catalytic subunit beta isoform (1070 aa).

Positions 26–115 (SDGSISVDFL…LPVLKLVTRS (90 aa)) constitute a PI3K-ABD domain. The 92-residue stretch at 194–285 (GGKLVVAVHF…RTLPHFILVE (92 aa)) folds into the PI3K-RBD domain. At serine 324 the chain carries Phosphoserine. Residues 327–496 (WGNNNPFQIV…NATALHIKFP (170 aa)) form the C2 PI3K-type domain. The Nuclear localization signal (NLS) signature appears at 410 to 418 (KVKTKKSTK). The 178-residue stretch at 524–701 (ANVSSRGGKK…GVILEAYCRG (178 aa)) folds into the PIK helical domain. Residues 772-1053 (YVEKCRYMDS…KFDEALRESW (282 aa)) enclose the PI3K/PI4K catalytic domain. Residues 778–784 (YMDSKMK) form a G-loop region. A catalytic loop region spans residues 916 to 924 (GIGDRHSDN). The activation loop stretch occupies residues 935 to 961 (HIDFGHILGNFKSKFGIKRERVPFILT). Phosphoserine; by autocatalysis is present on serine 1070.

The protein belongs to the PI3/PI4-kinase family. In terms of assembly, heterodimer of a catalytic subunit PIK3CB and a p85 regulatory subunit (PIK3R1, PIK3R2 or PIK3R3). Interaction with PIK3R2 is required for nuclear localization and nuclear export. Part of a complex with PIK3R1 and PTEN. Binding to PTEN may antagonize the lipid kinase activity under normal growth conditions. Part of a complex involved in autophagosome formation composed of PIK3C3 and PIK3R4. Interacts with BECN1, ATG14 and RAB5A. In terms of processing, autophosphorylation at Ser-1070 negatively regulates the phosphatidylinositol-4,5-bisphosphate 3-kinase activity.

Its subcellular location is the cytoplasm. It is found in the nucleus. The catalysed reaction is a 1,2-diacyl-sn-glycero-3-phospho-(1D-myo-inositol-4,5-bisphosphate) + ATP = a 1,2-diacyl-sn-glycero-3-phospho-(1D-myo-inositol-3,4,5-trisphosphate) + ADP + H(+). The enzyme catalyses 1-octadecanoyl-2-(5Z,8Z,11Z,14Z)-eicosatetraenoyl-sn-glycero-3-phospho-1D-myo-inositol 4,5-bisphosphate + ATP = 1-octadecanoyl-2-(5Z,8Z,11Z,14Z-eicosatetraenoyl)-sn-glycero-3-phospho-(1D-myo-inositol 3,4,5-triphosphate) + ADP + H(+). It catalyses the reaction L-seryl-[protein] + ATP = O-phospho-L-seryl-[protein] + ADP + H(+). Its pathway is phospholipid metabolism; phosphatidylinositol phosphate biosynthesis. In terms of biological role, phosphoinositide-3-kinase (PI3K) phosphorylates phosphatidylinositol (PI) derivatives at position 3 of the inositol ring to produce 3-phosphoinositides. Uses ATP and PtdIns(4,5)P2 (phosphatidylinositol 4,5-bisphosphate) to generate phosphatidylinositol 3,4,5-trisphosphate (PIP3). PIP3 plays a key role by recruiting PH domain-containing proteins to the membrane, including AKT1 and PDPK1, activating signaling cascades involved in cell growth, survival, proliferation, motility and morphology. Involved in the activation of AKT1 upon stimulation by G-protein coupled receptors (GPCRs) ligands such as CXCL12, sphingosine 1-phosphate, and lysophosphatidic acid. May also act downstream receptor tyrosine kinases. Required in different signaling pathways for stable platelet adhesion and aggregation. Plays a role in platelet activation signaling triggered by GPCRs, alpha-IIb/beta-3 integrins (ITGA2B/ ITGB3) and ITAM (immunoreceptor tyrosine-based activation motif)-bearing receptors such as GP6. Regulates the strength of adhesion of ITGA2B/ ITGB3 activated receptors necessary for the cellular transmission of contractile forces. Required for platelet aggregation induced by F2 (thrombin) and thromboxane A2 (TXA2). Has a role in cell survival. May have a role in cell migration. Involved in the early stage of autophagosome formation. Modulates the intracellular level of PtdIns3P (phosphatidylinositol 3-phosphate) and activates PIK3C3 kinase activity. May act as a scaffold, independently of its lipid kinase activity to positively regulate autophagy. May have a role in insulin signaling as scaffolding protein in which the lipid kinase activity is not required. May have a kinase-independent function in regulating cell proliferation and in clathrin-mediated endocytosis. Mediator of oncogenic signal in cell lines lacking PTEN. The lipid kinase activity is necessary for its role in oncogenic transformation. Required for the growth of ERBB2 and RAS driven tumors. Also has a protein kinase activity showing autophosphorylation. In Rattus norvegicus (Rat), this protein is Phosphatidylinositol 4,5-bisphosphate 3-kinase catalytic subunit beta isoform (Pik3cb).